The chain runs to 185 residues: Somatotropin (185 aa).

Cysteines 52 and 158 form a disulfide. Zn(2+) is bound at residue glutamate 167. Residues cysteine 175 and cysteine 183 are joined by a disulfide bond.

The protein belongs to the somatotropin/prolactin family.

Its subcellular location is the secreted. Growth hormone plays an important role in growth control and is involved in the regulation of several anabolic processes. Implicated as an osmoregulatory substance important for seawater adaptation. The chain is Somatotropin (gh) from Katsuwonus pelamis (Skipjack tuna).